We begin with the raw amino-acid sequence, 531 residues long: Peptide chain release factor 3 (531 aa).

Residues 10–278 (RRRRTFAIIS…SLIDWAPAPK (269 aa)) form the tr-type G domain. Residues 19 to 26 (SHPDAGKT), 87 to 91 (DTPGH), and 141 to 144 (NKYD) contribute to the GTP site.

It belongs to the TRAFAC class translation factor GTPase superfamily. Classic translation factor GTPase family. PrfC subfamily.

It localises to the cytoplasm. In terms of biological role, increases the formation of ribosomal termination complexes and stimulates activities of RF-1 and RF-2. It binds guanine nucleotides and has strong preference for UGA stop codons. It may interact directly with the ribosome. The stimulation of RF-1 and RF-2 is significantly reduced by GTP and GDP, but not by GMP. This Neisseria meningitidis serogroup B (strain ATCC BAA-335 / MC58) protein is Peptide chain release factor 3.